The sequence spans 354 residues: Putative Xaa-Pro aminopeptidase (354 aa).

Positions 213, 224, 290, 319, and 333 each coordinate Mn(2+).

The protein belongs to the peptidase M24B family. Requires Mn(2+) as cofactor.

The catalysed reaction is Release of any N-terminal amino acid, including proline, that is linked to proline, even from a dipeptide or tripeptide.. This is Putative Xaa-Pro aminopeptidase (pepP) from Mycoplasma pneumoniae (strain ATCC 29342 / M129 / Subtype 1) (Mycoplasmoides pneumoniae).